Here is an 876-residue protein sequence, read N- to C-terminus: Alanine--tRNA ligase (876 aa).

Histidine 564, histidine 568, cysteine 666, and histidine 670 together coordinate Zn(2+).

This sequence belongs to the class-II aminoacyl-tRNA synthetase family. Zn(2+) serves as cofactor.

The protein resides in the cytoplasm. The catalysed reaction is tRNA(Ala) + L-alanine + ATP = L-alanyl-tRNA(Ala) + AMP + diphosphate. Functionally, catalyzes the attachment of alanine to tRNA(Ala) in a two-step reaction: alanine is first activated by ATP to form Ala-AMP and then transferred to the acceptor end of tRNA(Ala). Also edits incorrectly charged Ser-tRNA(Ala) and Gly-tRNA(Ala) via its editing domain. This is Alanine--tRNA ligase from Colwellia psychrerythraea (strain 34H / ATCC BAA-681) (Vibrio psychroerythus).